Consider the following 369-residue polypeptide: Prenyltransferase malB (369 aa).

Glutamate 87 is a binding site for substrate. Residues arginine 100 and tyrosine 189 each contribute to the dimethylallyl diphosphate site. Tyrosine 191 is a substrate binding site.

Belongs to the tryptophan dimethylallyltransferase family.

In terms of biological role, prenyltransferase; part of the gene cluster that mediates the biosynthesis of malbrancheamide, a dichlorinated fungal indole alkaloid that belongs to a family of natural products containing a characteristic bicyclo[2.2.2]diazaoctane core. The first step of malbrancheamide biosynthesis involves coupling of L-proline and L-tryptophan by malG, a bimodular NRPS, to produce L-Pro-L-Trp aldehyde through reductive offloading. This compound undergoes spontaneous cyclization and dehydration to give a dienamine which is reverse prenylated at C-2 by malE. The other prenyltransferase present in the cluster, malB, displays modest activity, suggesting that may be a redundant gene in the pathway. Subsequently, a [4+2] Diels-Alder cyclo-addition catalyzed by the bifunctional enzyme malC forms the characteristic bicyclo[2.2.2]diazaoctane ring of premalbrancheamid. Finally, the flavin-dependent halogenase malA catalyzes the iterative dichlorination of the indole ring of premalbrancheamide to yield C-9 monochlorinated malbrancheamide B, C-8 monochlorinated isomalbrancheamide B, and dichlorinated malbrancheamide. MalA is also able to brominate premalbrancheamide at C-9 to yield malbrancheamide C, and, to a lesser extend, at C-8 to yield isomalbrancheamide C. Finally, malA can brominate C-9 monochlorinated malbrancheamide B at C-8 to yield malbrancheamide D, or C-8 monochlorinated isomalbrancheamide B at C-9 to produce isomalbrancheamide D. The protein is Prenyltransferase malB of Malbranchea aurantiaca.